Here is a 318-residue protein sequence, read N- to C-terminus: Methionyl-tRNA formyltransferase (318 aa).

111–114 (SLLP) lines the (6S)-5,6,7,8-tetrahydrofolate pocket.

Belongs to the Fmt family.

It carries out the reaction L-methionyl-tRNA(fMet) + (6R)-10-formyltetrahydrofolate = N-formyl-L-methionyl-tRNA(fMet) + (6S)-5,6,7,8-tetrahydrofolate + H(+). Attaches a formyl group to the free amino group of methionyl-tRNA(fMet). The formyl group appears to play a dual role in the initiator identity of N-formylmethionyl-tRNA by promoting its recognition by IF2 and preventing the misappropriation of this tRNA by the elongation apparatus. The sequence is that of Methionyl-tRNA formyltransferase from Chlorobium limicola (strain DSM 245 / NBRC 103803 / 6330).